Consider the following 235-residue polypeptide: Large ribosomal subunit protein uL1 (235 aa).

This sequence belongs to the universal ribosomal protein uL1 family. Part of the 50S ribosomal subunit.

Binds directly to 23S rRNA. The L1 stalk is quite mobile in the ribosome, and is involved in E site tRNA release. Its function is as follows. Protein L1 is also a translational repressor protein, it controls the translation of the L11 operon by binding to its mRNA. This chain is Large ribosomal subunit protein uL1, found in Fervidobacterium nodosum (strain ATCC 35602 / DSM 5306 / Rt17-B1).